Consider the following 81-residue polypeptide: Acyl carrier protein (81 aa).

The Carrier domain maps to 2–77 (ASVEEKVKQI…DAVDYITAHA (76 aa)). The residue at position 37 (S37) is an O-(pantetheine 4'-phosphoryl)serine.

It belongs to the acyl carrier protein (ACP) family. Post-translationally, 4'-phosphopantetheine is transferred from CoA to a specific serine of apo-ACP by AcpS. This modification is essential for activity because fatty acids are bound in thioester linkage to the sulfhydryl of the prosthetic group.

The protein resides in the cytoplasm. Its pathway is lipid metabolism; fatty acid biosynthesis. In terms of biological role, carrier of the growing fatty acid chain in fatty acid biosynthesis. The polypeptide is Acyl carrier protein (Koribacter versatilis (strain Ellin345)).